The following is a 153-amino-acid chain: Ribonuclease H (153 aa).

Positions 1 to 142 constitute an RNase H type-1 domain; that stretch reads MTDQIEIFTD…ADELARRGVD (142 aa). Mg(2+) is bound by residues aspartate 10, glutamate 48, aspartate 70, and aspartate 134.

This sequence belongs to the RNase H family. As to quaternary structure, monomer. It depends on Mg(2+) as a cofactor.

Its subcellular location is the cytoplasm. The catalysed reaction is Endonucleolytic cleavage to 5'-phosphomonoester.. In terms of biological role, endonuclease that specifically degrades the RNA of RNA-DNA hybrids. The polypeptide is Ribonuclease H (Aromatoleum aromaticum (strain DSM 19018 / LMG 30748 / EbN1) (Azoarcus sp. (strain EbN1))).